The following is a 79-amino-acid chain: Conotoxin Kt6.1 (79 aa).

The signal sequence occupies residues 1 to 22 (MKLTCVLIISVLFLTASQLITA). Positions 23-47 (VYSRDKQQYRAARLRDEMRNLKGAR) are excised as a propeptide. Intrachain disulfides connect Cys-49–Cys-62, Cys-56–Cys-67, and Cys-61–Cys-77. 2 positions are modified to 4-hydroxyproline: Pro-60 and Pro-63.

Belongs to the conotoxin O1 superfamily. Expressed by the venom duct.

Its subcellular location is the secreted. Its function is as follows. Ion channel inhibitor that inhibits the increase in intracellular calcium upon depolarization in DRG neurons. In vivo, both intraperitoneal and intracranial injections into mice induce hyperactivity. This is Conotoxin Kt6.1 from Conus kintoki (Cone snail).